Consider the following 186-residue polypeptide: Peptidyl-tRNA hydrolase (186 aa).

Tyrosine 14 lines the tRNA pocket. Residue histidine 19 is the Proton acceptor of the active site. TRNA-binding residues include phenylalanine 64, asparagine 66, and asparagine 112.

It belongs to the PTH family. In terms of assembly, monomer.

The protein resides in the cytoplasm. The enzyme catalyses an N-acyl-L-alpha-aminoacyl-tRNA + H2O = an N-acyl-L-amino acid + a tRNA + H(+). Functionally, hydrolyzes ribosome-free peptidyl-tRNAs (with 1 or more amino acids incorporated), which drop off the ribosome during protein synthesis, or as a result of ribosome stalling. Its function is as follows. Catalyzes the release of premature peptidyl moieties from peptidyl-tRNA molecules trapped in stalled 50S ribosomal subunits, and thus maintains levels of free tRNAs and 50S ribosomes. This is Peptidyl-tRNA hydrolase from Mycoplasma capricolum subsp. capricolum (strain California kid / ATCC 27343 / NCTC 10154).